The primary structure comprises 42 residues: Delta-actinopoditoxin-Mb1a (42 aa).

Cystine bridges form between cysteine 1–cysteine 15, cysteine 8–cysteine 20, cysteine 14–cysteine 31, and cysteine 16–cysteine 42.

It belongs to the neurotoxin 06 (delta-actx) family. As to expression, expressed by the venom gland.

The protein resides in the secreted. Its function is as follows. Neurotoxin that slows the inactivation of vertebrate tetrodotoxin-sensitive voltage-gated sodium channels (Nav) and most likely insect sodium channels presumably by binding to site 3 of the channel. Effects are an increase in resting tension, a muscle fasciculation and a decrease in indirect twitch tension. It fails to affect tetrodotoxin-resistant sodium currents. In vivo, is lethal to both vertebrates and insects. This is Delta-actinopoditoxin-Mb1a from Missulena bradleyi (Eastern mouse spider).